The sequence spans 291 residues: Phosphoribosylaminoimidazole-succinocarboxamide synthase (291 aa).

Belongs to the SAICAR synthetase family.

The enzyme catalyses 5-amino-1-(5-phospho-D-ribosyl)imidazole-4-carboxylate + L-aspartate + ATP = (2S)-2-[5-amino-1-(5-phospho-beta-D-ribosyl)imidazole-4-carboxamido]succinate + ADP + phosphate + 2 H(+). Its pathway is purine metabolism; IMP biosynthesis via de novo pathway; 5-amino-1-(5-phospho-D-ribosyl)imidazole-4-carboxamide from 5-amino-1-(5-phospho-D-ribosyl)imidazole-4-carboxylate: step 1/2. In Candida albicans (Yeast), this protein is Phosphoribosylaminoimidazole-succinocarboxamide synthase (ADE1).